The following is a 570-amino-acid chain: Ferroportin (570 aa).

The Cytoplasmic portion of the chain corresponds to 1 to 23 (MTKSRDQTHQEGCCGSLANYLTS). Residues 24–53 (AKFLLYLGHSLSTWGDRMWHFAVSVFLVEL) form a helical membrane-spanning segment. Fe cation contacts are provided by D39 and H43. At 54-57 (YGNS) the chain is on the extracellular side. A helical membrane pass occupies residues 58 to 84 (LLLTAVYGLVVAGSVLVLGAIIGDWVD). The Cytoplasmic portion of the chain corresponds to 85 to 87 (KNA). Residues 88–118 (RLKVAQTSLVVQNVSVILCGIILMMVFLHKN) traverse the membrane as a helical segment. Over 119-126 (ELLNMYHG) the chain is Extracellular. The chain crosses the membrane as a helical span at residues 127–162 (WVLTVCYILIITIANIANLASTATAITIQRDWIVVV). Residues 163–164 (AG) lie on the Cytoplasmic side of the membrane. The helical transmembrane segment at 165 to 195 (ENRSRLADMNATIRRIDQLTNILAPMAVGQI) threads the bilayer. Over 196 to 202 (MTFGSPV) the chain is Extracellular. The helical transmembrane segment at 203 to 229 (IGCGFISGWNLVSMCVEYFLLWKVYQK) threads the bilayer. Topologically, residues 230–306 (TPALAVKAAL…DGWVSYYNQP (77 aa)) are cytoplasmic. Residues 307–333 (VFLAGMGLAFLYMTVLGFDCITTGYAY) traverse the membrane as a helical segment. C326 is a Fe cation binding site. The Extracellular segment spans residues 334–338 (TQGLS). The helical transmembrane segment at 339–366 (GSILSVLMGASAITGIMGTVAFTWLRRK) threads the bilayer. At 367–368 (CG) the chain is on the cytoplasmic side. Residues 369 to 391 (LVRTGLFSGLAQLSCLILCVISV) traverse the membrane as a helical segment. Over 392–452 (FMPGSPLDLS…EMSTKSVPII (61 aa)) the chain is Extracellular. The chain crosses the membrane as a helical span at residues 453 to 482 (SVSLLFAGVIAARIGLWSFDLTVTQLLQEN). Topologically, residues 483 to 487 (VIESE) are cytoplasmic. The chain crosses the membrane as a helical span at residues 488-512 (RGIINGVQNSMNYLLDLLHFIMVIL). H506 contacts Fe cation. The Extracellular portion of the chain corresponds to 513-515 (APN). A helical membrane pass occupies residues 516-541 (PEAFGLLVLISVSFVAMGHLMYFRFA). The Cytoplasmic segment spans residues 542 to 570 (QKTLGNQIFVCAPDEKEVTDESQPNTSVV).

It belongs to the ferroportin (FP) (TC 2.A.100) family. SLC40A subfamily. In terms of assembly, identified in a complex with STOM. Interacts with HAMP; affinity of the peptide hormone HAMP for SLC40A1 increases by 80-fold in the presence of iron and the interaction promotes SLC40A1 ubiquitination and degradation. Part of a complex composed of SLC40A1/ferroportin, TF/transferrin and HEPH/hephaestin that transfers iron from cells to transferrin. Post-translationally, polyubiquitinated by RNF217; leading to proteasomal degradation. Under conditions of high systemic iron levels, both the hormone peptide hepcidin/HAMP and holo(iron bound)-transferrin/TF induce the ubiquitination, internalization and proteasomal degradation of SLC40A1 to control iron release from cells.

The protein resides in the cell membrane. It localises to the basolateral cell membrane. It carries out the reaction Fe(2+)(in) = Fe(2+)(out). Its activity is regulated as follows. During elevated serum iron levels, liver-derived hepcidin/HAMP negatively regulates cell surface SLC40A1 by inducing its ubiquitination, internalization, and degradation. Indeed, hepcidin/HAMP affinity towards ferroportin/SLC40A1 increases by 80-fold in the presence of iron. Its function is as follows. Transports Fe(2+) from the inside of a cell to the outside of the cell, playing a key role for maintaining systemic iron homeostasis. Transports iron from intestinal, splenic, hepatic cells, macrophages and erythrocytes into the blood to provide iron to other tissues. Controls therefore dietary iron uptake, iron recycling by macrophages and erythrocytes, and release of iron stores in hepatocytes. When iron is in excess in serum, circulating HAMP/hepcidin levels increase resulting in a degradation of SLC40A1, thus limiting the iron efflux to plasma. In Rattus norvegicus (Rat), this protein is Ferroportin.